A 229-amino-acid chain; its full sequence is Putative N-acetylmannosamine-6-phosphate 2-epimerase (229 aa).

This sequence belongs to the NanE family.

It carries out the reaction an N-acyl-D-glucosamine 6-phosphate = an N-acyl-D-mannosamine 6-phosphate. The protein operates within amino-sugar metabolism; N-acetylneuraminate degradation; D-fructose 6-phosphate from N-acetylneuraminate: step 3/5. Its function is as follows. Converts N-acetylmannosamine-6-phosphate (ManNAc-6-P) to N-acetylglucosamine-6-phosphate (GlcNAc-6-P). The polypeptide is Putative N-acetylmannosamine-6-phosphate 2-epimerase (Escherichia coli O139:H28 (strain E24377A / ETEC)).